Consider the following 183-residue polypeptide: Beta-defensin 129 (183 aa).

An N-terminal signal peptide occupies residues 1–19 (MKLLFPIFASLMLQYQVNT). 3 disulfide bridges follow: cysteine 27-cysteine 53, cysteine 34-cysteine 48, and cysteine 38-cysteine 54. Residues 141 to 183 (TATSTKSNTKESRDSATASSPPAPPPPNILPTPSLELEEAEEQ) form a disordered region. The segment covering 161–170 (PPAPPPPNIL) has biased composition (pro residues).

The protein belongs to the beta-defensin family.

The protein localises to the secreted. Its function is as follows. Has antibacterial activity. The sequence is that of Beta-defensin 129 (DEFB129) from Gorilla gorilla gorilla (Western lowland gorilla).